Here is a 283-residue protein sequence, read N- to C-terminus: MQIVTDPAEMQATADKLRAGRQLIGVVMTMGALHEGHLSLVNLAREHAGTIIMTLFVNPSQFGPGEDFQRYPRPFEKDAAMARSAGVDYLFAPTPEAMYPEGFQTTVSCSGITRRFEGERRPGHFDGVATIVSKLLNITRPHVAVFGEKDAQQLALIRRINRDLDMGVQIVAAPTVRENDGLAVSSRNIYLTGDERQKAPAIHRAIQHAGEMLAAGENDLKAVAAEVAGMITENTQFKLEYAAFVDEESFEPAETVVKEHEYRLLIAAAAERVRLIDNQKFRV.

30–37 (MGALHEGH) provides a ligand contact to ATP. Histidine 37 (proton donor) is an active-site residue. Glutamine 61 lines the (R)-pantoate pocket. Position 61 (glutamine 61) interacts with beta-alanine. 147–150 (GEKD) contacts ATP. A (R)-pantoate-binding site is contributed by glutamine 153. ATP-binding positions include valine 176 and 184–187 (VSSR).

This sequence belongs to the pantothenate synthetase family. Homodimer.

The protein resides in the cytoplasm. It catalyses the reaction (R)-pantoate + beta-alanine + ATP = (R)-pantothenate + AMP + diphosphate + H(+). Its pathway is cofactor biosynthesis; (R)-pantothenate biosynthesis; (R)-pantothenate from (R)-pantoate and beta-alanine: step 1/1. Its function is as follows. Catalyzes the condensation of pantoate with beta-alanine in an ATP-dependent reaction via a pantoyl-adenylate intermediate. The polypeptide is Pantothenate synthetase (Chlorobium luteolum (strain DSM 273 / BCRC 81028 / 2530) (Pelodictyon luteolum)).